A 164-amino-acid polypeptide reads, in one-letter code: CB1 cannabinoid receptor-interacting protein 1 (164 aa).

It belongs to the CNRIP family. In terms of assembly, interacts with the cannabinoid receptor CNR1 (via C-terminus). Does not interact with cannabinoid receptor CNR2.

Suppresses cannabinoid receptor CNR1-mediated tonic inhibition of voltage-gated calcium channels. Functionally, does not suppress cannabinoid receptor CNR1-mediated tonic inhibition of voltage-gated calcium channels. The sequence is that of CB1 cannabinoid receptor-interacting protein 1 (CNRIP1) from Homo sapiens (Human).